Consider the following 127-residue polypeptide: Anti-adapter protein IraD (127 aa).

Belongs to the GpW/Gp25 family. IraD subfamily. Interacts with RssB.

The protein resides in the cytoplasm. Inhibits RpoS proteolysis by regulating RssB activity, thereby increasing the stability of the sigma stress factor RpoS during oxidative stress. Its effect on RpoS stability is due to its interaction with RssB, which probably blocks the interaction of RssB with RpoS, and the consequent delivery of the RssB-RpoS complex to the ClpXP protein degradation pathway. The chain is Anti-adapter protein IraD from Escherichia coli O6:H1 (strain CFT073 / ATCC 700928 / UPEC).